The sequence spans 56 residues: Large ribosomal subunit protein bL33 (56 aa).

It belongs to the bacterial ribosomal protein bL33 family.

The protein is Large ribosomal subunit protein bL33 (rpmG) of Rickettsia prowazekii (strain Madrid E).